Here is a 465-residue protein sequence, read N- to C-terminus: E3 ubiquitin-protein ligase TRIM38 (465 aa).

An RING-type zinc finger spans residues 16–63 (CSICLSLMTNPVSINCGHSYCHLCITDFFKNPSQKQLRQETFCCPQCR). Ser70 carries the phosphoserine modification. A B box-type zinc finger spans residues 88–129 (DQEMSCEEHGEQFHLFCEDEGQLICWRCERAPQHKGHTTALV). Zn(2+)-binding residues include Cys93, His96, Cys115, and His121. In terms of domain architecture, B30.2/SPRY spans 274 to 465 (CNVSKLYFDV…SPLFLPPPGD (192 aa)).

As to quaternary structure, interacts (via B30.2/SPRY domain) with TAB2 and TAB3. In terms of tissue distribution, ubiquitous.

The protein resides in the cytoplasm. The enzyme catalyses S-ubiquitinyl-[E2 ubiquitin-conjugating enzyme]-L-cysteine + [acceptor protein]-L-lysine = [E2 ubiquitin-conjugating enzyme]-L-cysteine + N(6)-ubiquitinyl-[acceptor protein]-L-lysine.. Its pathway is protein modification; protein ubiquitination. It functions in the pathway protein modification; protein sumoylation. E3 ubiquitin-protein and E3 SUMO-protein ligase that acts as a regulator of innate immunity. Acts as a negative regulator of type I interferon IFN-beta production by catalyzing 'Lys-48'-linked polyubiquitination of AZI2/NAP1, leading to its degradation. Mediates 'Lys-48'-linked polyubiquitination and proteasomal degradation of the critical TLR adapter TICAM1, inhibiting TLR3-mediated type I interferon signaling. Acts as positive regulator of the cGAS-STING pathway by acting as a E3 SUMO-protein ligase: mediates sumoylation of CGAS and STING, preventing their degradation and thereby activating the innate immune response to DNA virus. Also acts as a negative regulator of NF-kappa-B signaling independently of its E3 protein ligase activity by promoting lysosome-dependent degradation of TAB2 and TAB3 adapters. The polypeptide is E3 ubiquitin-protein ligase TRIM38 (Homo sapiens (Human)).